Here is a 105-residue protein sequence, read N- to C-terminus: Late embryogenesis abundant protein Lea5-A (105 aa).

This sequence belongs to the LEA type 3 family.

The protein is Late embryogenesis abundant protein Lea5-A (LEA5-A) of Gossypium hirsutum (Upland cotton).